The sequence spans 172 residues: Endoribonuclease YbeY (172 aa).

The Zn(2+) site is built by His136, His140, and His146.

Belongs to the endoribonuclease YbeY family. The cofactor is Zn(2+).

Its subcellular location is the cytoplasm. Single strand-specific metallo-endoribonuclease involved in late-stage 70S ribosome quality control and in maturation of the 3' terminus of the 16S rRNA. In Rickettsia canadensis (strain McKiel), this protein is Endoribonuclease YbeY.